A 433-amino-acid chain; its full sequence is Transcriptional enhancer factor TEF-5 (433 aa).

Polar residues predominate over residues 1–12 (MASNSWNASSSP). The disordered stretch occupies residues 1-35 (MASNSWNASSSPGEGREDGQDGMDKSLDNDAEGVW). Residues 14–28 (EGREDGQDGMDKSLD) show a composition bias toward basic and acidic residues. Positions 28–104 (DNDAEGVWSP…QVLARREISG (77 aa)) form a DNA-binding region, TEA. The tract at residues 171-433 (GPSQDIKPFA…QHHVYKLVKD (263 aa)) is transcriptional activation.

As to expression, high levels in cardiac muscle, low in skeletal muscle. Intermediate levels in gizzard and lung, low levels in kidney.

It localises to the nucleus. In terms of biological role, transcription factor which plays a key role in the Hippo signaling pathway, a pathway involved in organ size control and tumor suppression by restricting proliferation and promoting apoptosis. The core of this pathway is composed of a kinase cascade wherein MST1/MST2, in complex with its regulatory protein SAV1, phosphorylates and activates LATS1/2 in complex with its regulatory protein MOB1, which in turn phosphorylates and inactivates YAP1 oncoprotein and WWTR1/TAZ. The polypeptide is Transcriptional enhancer factor TEF-5 (TEAD3) (Gallus gallus (Chicken)).